The following is a 233-amino-acid chain: Large ribosomal subunit protein uL1 (233 aa).

This sequence belongs to the universal ribosomal protein uL1 family. Part of the 50S ribosomal subunit.

Its function is as follows. Binds directly to 23S rRNA. The L1 stalk is quite mobile in the ribosome, and is involved in E site tRNA release. Functionally, protein L1 is also a translational repressor protein, it controls the translation of the L11 operon by binding to its mRNA. This is Large ribosomal subunit protein uL1 from Syntrophomonas wolfei subsp. wolfei (strain DSM 2245B / Goettingen).